Consider the following 196-residue polypeptide: Corrinoid adenosyltransferase (196 aa).

An ATP-binding site is contributed by 36 to 42; it reads GNGKGKT.

Belongs to the Cob(I)alamin adenosyltransferase family.

It is found in the cytoplasm. The enzyme catalyses 2 cob(II)yrinate a,c diamide + reduced [electron-transfer flavoprotein] + 2 ATP = 2 adenosylcob(III)yrinate a,c-diamide + 2 triphosphate + oxidized [electron-transfer flavoprotein] + 3 H(+). It catalyses the reaction 2 cob(II)alamin + reduced [electron-transfer flavoprotein] + 2 ATP = 2 adenosylcob(III)alamin + 2 triphosphate + oxidized [electron-transfer flavoprotein] + 3 H(+). It participates in cofactor biosynthesis; adenosylcobalamin biosynthesis; adenosylcobalamin from cob(II)yrinate a,c-diamide: step 2/7. Functionally, required for both de novo synthesis of the corrin ring for the assimilation of exogenous corrinoids. Participates in the adenosylation of a variety of incomplete and complete corrinoids. The chain is Corrinoid adenosyltransferase (btuR) from Escherichia coli O6:H1 (strain CFT073 / ATCC 700928 / UPEC).